Reading from the N-terminus, the 421-residue chain is Putative zinc finger protein R05D3.3 (421 aa).

2 C2H2-type zinc fingers span residues Val-207 to His-228 and Tyr-234 to His-257. Residues Gly-400 to Val-421 form a disordered region.

The protein localises to the nucleus. This Caenorhabditis elegans protein is Putative zinc finger protein R05D3.3.